A 217-amino-acid chain; its full sequence is Adapter protein MecA (217 aa).

The protein belongs to the MecA family. As to quaternary structure, homodimer.

Its function is as follows. Enables the recognition and targeting of unfolded and aggregated proteins to the ClpC protease or to other proteins involved in proteolysis. This Listeria innocua serovar 6a (strain ATCC BAA-680 / CLIP 11262) protein is Adapter protein MecA.